The following is a 941-amino-acid chain: Lysine-specific demethylase 7A (941 aa).

The segment at 37–88 adopts a PHD-type zinc-finger fold; sequence PVYCVCRQPYDVNRFMIECDICKDWFHGSCVGVEEHHAVDIDLYHCPNCAVL. Residues 97-114 are linker; it reads RRNWHRHDYTEIDDGSKP. The region spanning 230 to 386 is the JmjC domain; it reads FSDTKMSELV…MQLRCYEMEK (157 aa). Threonine 279 contributes to the substrate binding site. 2 residues coordinate Fe cation: histidine 282 and aspartate 284. Lysine 299 is a substrate binding site. Residue histidine 354 coordinates Fe cation. Disordered regions lie at residues 597 to 633, 677 to 700, and 819 to 921; these read QSLY…EHEE, TTEE…KEES, and QDLS…MATA. A Phosphoserine modification is found at serine 604. Composition is skewed to basic and acidic residues over residues 618-633 and 685-700; these read MKIE…EHEE and GDEK…KEES. Residues 834–876 show a composition bias toward polar residues; that stretch reads SEISQRVQSRNYVDSSGSSLQNGKYMQNSNLTSGACQISNGSL.

The protein belongs to the JHDM1 histone demethylase family. JHDM1D subfamily. It depends on Fe(2+) as a cofactor.

Its subcellular location is the nucleus. The catalysed reaction is N(6),N(6)-dimethyl-L-lysyl(9)-[histone H3] + 2 2-oxoglutarate + 2 O2 = L-lysyl(9)-[histone H3] + 2 formaldehyde + 2 succinate + 2 CO2. It carries out the reaction N(6),N(6)-dimethyl-L-lysyl(27)-[histone H3] + 2 2-oxoglutarate + 2 O2 = L-lysyl(27)-[histone H3] + 2 formaldehyde + 2 succinate + 2 CO2. It catalyses the reaction N(6),N(6)-dimethyl-L-lysyl(36)-[histone H3] + 2-oxoglutarate + O2 = N(6)-methyl-L-lysyl(36)-[histone H3] + formaldehyde + succinate + CO2. The enzyme catalyses N(6)-methyl-L-lysyl(20)-[histone H4] + 2-oxoglutarate + O2 = L-lysyl(20)-[histone H4] + formaldehyde + succinate + CO2. In terms of biological role, histone demethylase required for brain development. Specifically demethylates dimethylated 'Lys-9', 'Lys-27' and 'Lys-36' (H3K9me2, H3K27me2, H3K36me2, respectively) of histone H3 and monomethylated histone H4 'Lys-20' residue (H4K20Me1), thereby playing a central role in histone code. Specifically binds trimethylated 'Lys-4' of histone H3 (H3K4me3), affecting histone demethylase specificity: in presence of H3K4me3, it has no demethylase activity toward H3K9me2, while it has high activity toward H3K27me2. Demethylates H3K9me2 in absence of H3K4me3. Has activity toward H4K20Me1 only when nucleosome is used as a substrate and when not histone octamer is used as substrate. In Homo sapiens (Human), this protein is Lysine-specific demethylase 7A (KDM7A).